The chain runs to 431 residues: 3-phosphoshikimate 1-carboxyvinyltransferase (431 aa).

Residues K26, S27, and R31 each coordinate 3-phosphoshikimate. K26 contributes to the phosphoenolpyruvate binding site. The phosphoenolpyruvate site is built by G100 and R129. 3-phosphoshikimate contacts are provided by S175, S176, Q177, D308, and Q335. Q177 serves as a coordination point for phosphoenolpyruvate. D308 serves as the catalytic Proton acceptor. The phosphoenolpyruvate site is built by R339, R381, and K412.

Belongs to the EPSP synthase family. As to quaternary structure, monomer.

It is found in the cytoplasm. It catalyses the reaction 3-phosphoshikimate + phosphoenolpyruvate = 5-O-(1-carboxyvinyl)-3-phosphoshikimate + phosphate. It participates in metabolic intermediate biosynthesis; chorismate biosynthesis; chorismate from D-erythrose 4-phosphate and phosphoenolpyruvate: step 6/7. Catalyzes the transfer of the enolpyruvyl moiety of phosphoenolpyruvate (PEP) to the 5-hydroxyl of shikimate-3-phosphate (S3P) to produce enolpyruvyl shikimate-3-phosphate and inorganic phosphate. The polypeptide is 3-phosphoshikimate 1-carboxyvinyltransferase (Opitutus terrae (strain DSM 11246 / JCM 15787 / PB90-1)).